A 406-amino-acid polypeptide reads, in one-letter code: Probable endo-xylogalacturonan hydrolase A (406 aa).

Residues 1–18 (MISLNSIFLLSLVGLSRA) form the signal peptide. Residues 20–49 (PSRSETSPDRTIKPRAACTPTAGGSSSTDD) form a disordered region. PbH1 repeat units follow at residues 183–213 (TSNAQFTSLTMDATSNSDNLPKNTDAFDIGA), 214–235 (STYVTISSVAITNDDDCVAFKP), 237–257 (ANYVTVENVSCTGSHGISVGS), 266–289 (VQNVYARNITMINSSKAAGIKTYP), 299–320 (VKNATFEDFIVDGCDYAFQIQS), and 368–390 (TCDVTISGFEVKAPSGDAKILCG). The active-site Proton donor is aspartate 228. Asparagine 244 carries an N-linked (GlcNAc...) asparagine glycan. Histidine 251 is an active-site residue. Asparagine 273, asparagine 278, and asparagine 301 each carry an N-linked (GlcNAc...) asparagine glycan.

Belongs to the glycosyl hydrolase 28 family.

It is found in the secreted. In terms of biological role, pectinolytic enzyme involved in the degradation of xylogalacturonan (xga), a galacturonan backbone heavily substituted with xylose, and which is one important component of the hairy regions of pectin. Activity requires a galacturonic acid backbone substituted with xylose. This chain is Probable endo-xylogalacturonan hydrolase A (xghA), found in Aspergillus flavus (strain ATCC 200026 / FGSC A1120 / IAM 13836 / NRRL 3357 / JCM 12722 / SRRC 167).